Here is a 1055-residue protein sequence, read N- to C-terminus: Elongation factor 3 (1055 aa).

Residue V45 participates in ADP binding. 7 HEAT repeats span residues 48–86, 96–133, 134–172, 176–213, 218–255, 257–290, and 296–337; these read FTQI…NGAA, SAEN…SMNP, WASF…SAPF, EAMP…LVEN, KFVP…APTI, LIAP…LVDS, and PFLP…VPAE. 2 ABC transporter domains span residues 447–659 and 687–1004; these read CNIE…SYYQ and LKMR…KKAA. N723, E933, N936, and H962 together coordinate ADP. The tract at residues 1024–1055 is disordered; the sequence is EKKLSAADKRKAKKDRMARRKRGEEVFSDEEL. Positions 1033-1044 are enriched in basic residues; it reads RKAKKDRMARRK.

Belongs to the ABC transporter superfamily. ABCF family. EF3 subfamily. As to quaternary structure, interacts with CCH1; the interaction is direct and required for the localization of CCH1 to the cell membrane.

It localises to the cytoplasm. It is found in the cytosol. The catalysed reaction is ATP + H2O = ADP + phosphate + H(+). The protein operates within protein biosynthesis; polypeptide chain elongation. In terms of biological role, ribosome-dependent ATPase that functions in cytoplasmic translation elongation. Required for the ATP-dependent release of deacylated tRNA from the ribosomal E-site during protein biosynthesis. Stimulates the eEF1A-dependent binding of aminoacyl-tRNA to the ribosomal A-site, which has reduced affinity for tRNA as long as the E-site is occupied. Assists translation termination by stimulating the release of nascent protein from the ribosome by release factors. Appears to localize calcium-channel protein CCH1 to the plasma membrane. This chain is Elongation factor 3, found in Cryptococcus neoformans var. grubii serotype A (strain H99 / ATCC 208821 / CBS 10515 / FGSC 9487) (Filobasidiella neoformans var. grubii).